A 370-amino-acid polypeptide reads, in one-letter code: Forkhead box protein J1.2 (370 aa).

The disordered stretch occupies residues 45 to 74; it reads ANSRPPVPRVSQGPCSPPAGDTASCQAPRT. A DNA-binding region (fork-head) is located at residues 108–202; the sequence is KPPYSYATLI…VNGVLKRRRM (95 aa). The interval 227 to 246 is disordered; the sequence is PGSHHMQHISGGHRQSRRYE.

This sequence belongs to the FOXJ1 family.

Its subcellular location is the nucleus. Functionally, key transcription factor required for motile ciliogenesis. Activates genes essential for motile cilia formation and function. In Xenopus laevis (African clawed frog), this protein is Forkhead box protein J1.2.